A 35-amino-acid chain; its full sequence is Cycloamanide F proprotein (35 aa).

Positions 1–10 (MSDINATRLP) are excised as a propeptide. The cyclopeptide (Ile-Pro) cross-link spans 11 to 18 (IVGILGLP). A propeptide spanning residues 19–35 (CIGDDVNSTLTHGEDLC) is cleaved from the precursor.

This sequence belongs to the MSDIN fungal toxin family. Post-translationally, processed by the macrocyclase-peptidase enzyme POPB to yield a cyclic decapeptide. POPB first removes 10 residues from the N-terminus. Conformational trapping of the remaining peptide forces the enzyme to release this intermediate rather than proceed to macrocyclization. The enzyme rebinds the remaining peptide in a different conformation and catalyzes macrocyclization of the N-terminal 8 residues.

In terms of biological role, cyclic octapeptide that belongs to the MSDIN-like toxin family responsible for a large number of food poisoning cases and deaths. Cycloaminide E is structurally related to other cycloamanides that are non-toxic to mammals but show immunosuppressive activity. This chain is Cycloamanide F proprotein, found in Amanita phalloides (Death cap).